The following is a 181-amino-acid chain: Large ribosomal subunit protein uL6 (181 aa).

This sequence belongs to the universal ribosomal protein uL6 family. Part of the 50S ribosomal subunit.

In terms of biological role, this protein binds to the 23S rRNA, and is important in its secondary structure. It is located near the subunit interface in the base of the L7/L12 stalk, and near the tRNA binding site of the peptidyltransferase center. The polypeptide is Large ribosomal subunit protein uL6 (Flavobacterium psychrophilum (strain ATCC 49511 / DSM 21280 / CIP 103535 / JIP02/86)).